Consider the following 491-residue polypeptide: Aspartyl/glutamyl-tRNA(Asn/Gln) amidotransferase subunit B (491 aa).

The protein belongs to the GatB/GatE family. GatB subfamily. In terms of assembly, heterotrimer of A, B and C subunits.

It catalyses the reaction L-glutamyl-tRNA(Gln) + L-glutamine + ATP + H2O = L-glutaminyl-tRNA(Gln) + L-glutamate + ADP + phosphate + H(+). The enzyme catalyses L-aspartyl-tRNA(Asn) + L-glutamine + ATP + H2O = L-asparaginyl-tRNA(Asn) + L-glutamate + ADP + phosphate + 2 H(+). Functionally, allows the formation of correctly charged Asn-tRNA(Asn) or Gln-tRNA(Gln) through the transamidation of misacylated Asp-tRNA(Asn) or Glu-tRNA(Gln) in organisms which lack either or both of asparaginyl-tRNA or glutaminyl-tRNA synthetases. The reaction takes place in the presence of glutamine and ATP through an activated phospho-Asp-tRNA(Asn) or phospho-Glu-tRNA(Gln). In Prochlorococcus marinus (strain NATL1A), this protein is Aspartyl/glutamyl-tRNA(Asn/Gln) amidotransferase subunit B.